Here is a 381-residue protein sequence, read N- to C-terminus: Cytochrome b (381 aa).

4 consecutive transmembrane segments (helical) span residues 34-54 (FGSL…FLAM), 78-99 (WLIR…YLHI), 114-134 (WNIG…GYVL), and 179-199 (FFAF…IHLL). Residues H84 and H98 each coordinate heme b. The heme b site is built by H183 and H197. An a ubiquinone-binding site is contributed by H202. 4 helical membrane passes run 227–247 (YKDL…ALFM), 289–309 (LGGV…PLLH), 321–341 (LTQI…WIGG), and 348–368 (FITV…IIMP).

The protein belongs to the cytochrome b family. As to quaternary structure, the cytochrome bc1 complex contains 3 respiratory subunits (MT-CYB, CYC1 and UQCRFS1), 2 core proteins (UQCRC1 and UQCRC2) and probably 6 low-molecular weight proteins. The cofactor is heme b.

The protein resides in the mitochondrion inner membrane. Its function is as follows. Component of the ubiquinol-cytochrome c reductase complex (complex III or cytochrome b-c1 complex) that is part of the mitochondrial respiratory chain. The b-c1 complex mediates electron transfer from ubiquinol to cytochrome c. Contributes to the generation of a proton gradient across the mitochondrial membrane that is then used for ATP synthesis. The protein is Cytochrome b (mt-cyb) of Sphyrna lewini (Scalloped hammerhead shark).